Here is a 486-residue protein sequence, read N- to C-terminus: uncharacterized protein (486 aa).

This is an uncharacterized protein from Methanocaldococcus jannaschii (strain ATCC 43067 / DSM 2661 / JAL-1 / JCM 10045 / NBRC 100440) (Methanococcus jannaschii).